The primary structure comprises 23 residues: Phallacidin proprotein (23 aa).

P1 is a propeptide. Positions A2 to P8 form a cross-link, cyclopeptide (Ala-Pro). A cross-link (2'-cysteinyl-6'-hydroxytryptophan sulfoxide (Trp-Cys)) is located at residues W3–C7. Positions C9–K23 are excised as a propeptide.

Belongs to the MSDIN fungal toxin family. Post-translationally, processed by the macrocyclase-peptidase enzyme POPB to yield a toxic cyclic heptapeptide. POPB first removes 10 residues from the N-terminus. Conformational trapping of the remaining peptide forces the enzyme to release this intermediate rather than proceed to macrocyclization. The enzyme rebinds the remaining peptide in a different conformation and catalyzes macrocyclization of the N-terminal 7 residues.

In terms of biological role, major toxin that belongs to the bicyclic heptapeptides called phallotoxins. Although structurally related to amatoxins, phallotoxins have a different mode of action, which is the stabilization of F-actin. Phallotoxins are poisonous when administered parenterally, but not orally because of poor absorption. This Amanita fuliginea (East Asian brown death cap) protein is Phallacidin proprotein.